The chain runs to 237 residues: Phosphoribosylaminoimidazole-succinocarboxamide synthase (237 aa).

This sequence belongs to the SAICAR synthetase family.

The enzyme catalyses 5-amino-1-(5-phospho-D-ribosyl)imidazole-4-carboxylate + L-aspartate + ATP = (2S)-2-[5-amino-1-(5-phospho-beta-D-ribosyl)imidazole-4-carboxamido]succinate + ADP + phosphate + 2 H(+). It participates in purine metabolism; IMP biosynthesis via de novo pathway; 5-amino-1-(5-phospho-D-ribosyl)imidazole-4-carboxamide from 5-amino-1-(5-phospho-D-ribosyl)imidazole-4-carboxylate: step 1/2. This Proteus mirabilis (strain HI4320) protein is Phosphoribosylaminoimidazole-succinocarboxamide synthase.